Reading from the N-terminus, the 389-residue chain is Glycerol-3-phosphate dehydrogenase [NAD(+)] 2 (389 aa).

NAD(+) is bound by residues 40–45 (GSGNWG), F128, K151, and A184. Position 151 (K151) interacts with substrate. Catalysis depends on K244, which acts as the Proton acceptor. NAD(+)-binding residues include R309 and Q338. Residue 309–310 (RN) coordinates substrate.

The protein belongs to the NAD-dependent glycerol-3-phosphate dehydrogenase family.

It is found in the cytoplasm. It carries out the reaction sn-glycerol 3-phosphate + NAD(+) = dihydroxyacetone phosphate + NADH + H(+). The polypeptide is Glycerol-3-phosphate dehydrogenase [NAD(+)] 2 (GPD2) (Zygosaccharomyces rouxii).